The chain runs to 485 residues: Inosine-5'-monophosphate dehydrogenase (485 aa).

CBS domains follow at residues 97–154 (IIRD…VSDV) and 155–211 (MVRD…PDAS). NAD(+)-binding positions include Asp246 and 295–297 (GIG). Gly297 and Gly299 together coordinate K(+). Ser300 contributes to the IMP binding site. Position 302 (Cys302) interacts with K(+). Catalysis depends on Cys302, which acts as the Thioimidate intermediate. Residues 335-337 (DGG), 358-359 (GS), and 382-386 (YRGMG) contribute to the IMP site. Arg398 (proton acceptor) is an active-site residue. Glu409 lines the IMP pocket. Positions 463, 464, and 465 each coordinate K(+).

It belongs to the IMPDH/GMPR family. As to quaternary structure, homotetramer. Requires K(+) as cofactor.

The catalysed reaction is IMP + NAD(+) + H2O = XMP + NADH + H(+). Its pathway is purine metabolism; XMP biosynthesis via de novo pathway; XMP from IMP: step 1/1. Its activity is regulated as follows. Mycophenolic acid (MPA) is a non-competitive inhibitor that prevents formation of the closed enzyme conformation by binding to the same site as the amobile flap. In contrast, mizoribine monophosphate (MZP) is a competitive inhibitor that induces the closed conformation. MPA is a potent inhibitor of mammalian IMPDHs but a poor inhibitor of the bacterial enzymes. MZP is a more potent inhibitor of bacterial IMPDH. Its function is as follows. Catalyzes the conversion of inosine 5'-phosphate (IMP) to xanthosine 5'-phosphate (XMP), the first committed and rate-limiting step in the de novo synthesis of guanine nucleotides, and therefore plays an important role in the regulation of cell growth. This chain is Inosine-5'-monophosphate dehydrogenase, found in Thermoplasma acidophilum (strain ATCC 25905 / DSM 1728 / JCM 9062 / NBRC 15155 / AMRC-C165).